The chain runs to 1954 residues: Chromodomain-helicase-DNA-binding protein 5 (1954 aa).

2 disordered regions span residues Met1–Ser134 and Pro225–Tyr338. Acidic residues-rich tracts occupy residues Glu17–Asp37 and Asn72–Gly90. Residues Asn96–Lys115 show a composition bias toward basic residues. Over residues Ala227–Val237 the composition is skewed to pro residues. Positions Gly251–Ala272 are enriched in basic residues. A compositionally biased stretch (acidic residues) spans Ser291–Phe301. Basic residues predominate over residues Lys321 to Lys330. 2 PHD-type zinc fingers span residues Gln343–Glu390 and Met416–Pro463. The segment at Gln343 to Thr653 is histone-binding. Residues Leu497 to Phe554 enclose the Chromo 1 domain. Residues Asp549–Lys571 are disordered. Basic and acidic residues predominate over residues Glu561 to Lys571. The 62-residue stretch at Met592–Thr653 folds into the Chromo 2 domain. Positions Arg712 to Glu896 constitute a Helicase ATP-binding domain. Asp725–Thr732 is an ATP binding site. The DEAH box motif lies at Asp847 to His850. Positions Leu1028–Leu1193 constitute a Helicase C-terminal domain. Disordered stretches follow at residues Met1209–Ser1253, Tyr1351–Leu1411, Tyr1524–Gly1564, Ala1597–Val1640, and Ser1658–Asp1696. Acidic residues-rich tracts occupy residues Ser1355 to Ser1366 and Ser1376 to Glu1385. Gln1390 is subject to N5-methylglutamine. Ser1554 carries the post-translational modification Phosphoserine. Over residues Ser1554–Gly1564 the composition is skewed to low complexity. 2 stretches are compositionally biased toward basic and acidic residues: residues Asp1600 to Lys1627 and Ser1658 to Ile1678.

It belongs to the SNF2/RAD54 helicase family. Component of the nucleosome remodeling and deacetylase (NuRD) repressor complex, composed of core proteins MTA1, MTA2, MTA3, RBBP4, RBBP7, HDAC1, HDAC2, MBD2, MBD3, and peripherally associated proteins CDK2AP1, CDK2AP2, GATAD2A, GATAD2B, CHD3, CHD4 and CHD5. The exact stoichiometry of the NuRD complex is unknown, and some subunits such as MBD2 and MBD3, GATAD2A and GATAD2B, and CHD3, CHD4 and CHD5 define mutually exclusive NuRD complexes. Interacts with HDAC2. Methylated at Gln-1390 by N6AMT1. Preferentially expressed in total brain, fetal brain, and cerebellum. It is also moderately expressed in the adrenal gland and detected in testis.

Its subcellular location is the nucleus. The protein localises to the chromosome. The enzyme catalyses ATP + H2O = ADP + phosphate + H(+). In terms of biological role, ATP-dependent chromatin-remodeling factor that binds DNA through histones and regulates gene transcription. May specifically recognize and bind trimethylated 'Lys-27' (H3K27me3) and non-methylated 'Lys-4' of histone H3. Acts as a component of the histone deacetylase NuRD complex which participates in the remodeling of chromatin. Plays a role in the development of the nervous system by activating the expression of genes promoting neuron terminal differentiation. In parallel, it may also positively regulate the trimethylation of histone H3 at 'Lys-27' thereby specifically repressing genes that promote the differentiation into non-neuronal cell lineages. Regulates the expression of genes involved in cell proliferation and differentiation. Downstream activated genes may include CDKN2A that positively regulates the p53/TP53 pathway, which in turn, prevents cell proliferation. In spermatogenesis, it probably regulates histone hyperacetylation and the replacement of histones by transition proteins in chromatin, a crucial step in the condensation of spermatid chromatin and the production of functional spermatozoa. In Homo sapiens (Human), this protein is Chromodomain-helicase-DNA-binding protein 5.